The primary structure comprises 504 residues: MKYSYLLLILLLSNLYKEGFSQGQPDSIVLSATIYDESPIVTDFEIETYYNGVVEGIVQPDLGADGTPVYCCGDSPVTENGRIVVHNQSTFYSWFHSVPGVNVPIPYDLTLTRVGDSTYAYQSNSFFPIDGNGFDNSTVYPNEPHYLGHNFHFCMKIHYSFTYHGGEYFTFSGDDDVWVFFDDVLRIDIGGIHTAASRTVNMDDLGLTVGQSYPWDFFYCERHTSQSTLNIITNLNFTCSAYDACGVCDGHNDTCCMVNQCSESPINPCLIQACGPDNNYQCEFVDKICNTTNDKCLVESCEIGFGCLAIPKNCNDNDPCTTDHCDPAIGCYYDKFDNCDACNAVDTCITNDLCFPRECNPRGNPPCLINPINCTSTDPCIFSYCENGVCIPTYICTPTPSVTPTVTPTVTPTVTPTVTPTVTPTVTPTPTTTPTPSPTTVPPRPTPTPLPADPPPYDLEEGCLVCRDLDCEKTGKSCTYLENETIRLFECKGVGCCKYTPTCY.

An N-terminal signal peptide occupies residues 1–21 (MKYSYLLLILLLSNLYKEGFS). N87, N136, N236, N252, N290, and N373 each carry an N-linked (GlcNAc...) asparagine glycan. The 141-residue stretch at 111–251 (LTRVGDSTYA…YDACGVCDGH (141 aa)) folds into the PA14 domain. Over residues 417–430 (TVTPTVTPTVTPTP) the composition is skewed to low complexity. A disordered region spans residues 417–453 (TVTPTVTPTVTPTPTTTPTPSPTTVPPRPTPTPLPAD). Positions 431–453 (TTTPTPSPTTVPPRPTPTPLPAD) are enriched in pro residues. An N-linked (GlcNAc...) asparagine glycan is attached at N483.

It belongs to the prespore-cell-inducing factor family.

It localises to the secreted. The sequence is that of Protein psiD (psiD) from Dictyostelium discoideum (Social amoeba).